The following is a 268-amino-acid chain: Phosphatidylglycerol--prolipoprotein diacylglyceryl transferase (268 aa).

7 helical membrane passes run 21 to 41 (WYGI…GRFA), 54 to 74 (FAII…VFVL), 93 to 113 (GLAI…YLPM), 122 to 142 (ADVV…GNFF), 173 to 193 (VMHP…GILL), 203 to 223 (GVVF…IESI), and 236 to 256 (VAQL…AWFL). Position 137 (R137) interacts with a 1,2-diacyl-sn-glycero-3-phospho-(1'-sn-glycerol).

It belongs to the Lgt family.

It localises to the cell membrane. It carries out the reaction L-cysteinyl-[prolipoprotein] + a 1,2-diacyl-sn-glycero-3-phospho-(1'-sn-glycerol) = an S-1,2-diacyl-sn-glyceryl-L-cysteinyl-[prolipoprotein] + sn-glycerol 1-phosphate + H(+). Its pathway is protein modification; lipoprotein biosynthesis (diacylglyceryl transfer). In terms of biological role, catalyzes the transfer of the diacylglyceryl group from phosphatidylglycerol to the sulfhydryl group of the N-terminal cysteine of a prolipoprotein, the first step in the formation of mature lipoproteins. This is Phosphatidylglycerol--prolipoprotein diacylglyceryl transferase from Symbiobacterium thermophilum (strain DSM 24528 / JCM 14929 / IAM 14863 / T).